The chain runs to 494 residues: NADH-quinone oxidoreductase subunit N (494 aa).

The next 14 membrane-spanning stretches (helical) occupy residues 9 to 29, 36 to 56, 73 to 93, 107 to 127, 131 to 151, 166 to 186, 209 to 229, 241 to 261, 278 to 298, 304 to 324, 339 to 359, 382 to 402, 416 to 436, and 469 to 489; these read VIPEIFLAAATCAILLIDLFL, LTYVLSLATLVVCAVLSLSDF, PMSNLLKFCTYIAVGLTLVYS, LGGEFYILSLFTVLGQMVMMS, FLIIYLGLEIMSLSLYALVAF, FVLGALASGFLLYGISMLYGA, LIFGLVFVVAGLAFKLGAVPF, PTAVTLMLGGAPKLAAFAITI, MLTILSVLSMAIGNITAIMQT, LAYSTISQVGFILLGLLSGVV, MFYVITYVLTTLGMFGVIMLL, FAFVTLLLMFSLAGVPPVVGF, GQIWLAVVAVLFSLIGAFYYL, and ALLALGLVPGPLMTACAAAII.

Belongs to the complex I subunit 2 family. NDH-1 is composed of 14 different subunits. Subunits NuoA, H, J, K, L, M, N constitute the membrane sector of the complex.

Its subcellular location is the cell inner membrane. It carries out the reaction a quinone + NADH + 5 H(+)(in) = a quinol + NAD(+) + 4 H(+)(out). Its function is as follows. NDH-1 shuttles electrons from NADH, via FMN and iron-sulfur (Fe-S) centers, to quinones in the respiratory chain. The immediate electron acceptor for the enzyme in this species is believed to be ubiquinone. Couples the redox reaction to proton translocation (for every two electrons transferred, four hydrogen ions are translocated across the cytoplasmic membrane), and thus conserves the redox energy in a proton gradient. The sequence is that of NADH-quinone oxidoreductase subunit N from Herminiimonas arsenicoxydans.